Reading from the N-terminus, the 607-residue chain is DNA mismatch repair protein MutL (607 aa).

It belongs to the DNA mismatch repair MutL/HexB family.

In terms of biological role, this protein is involved in the repair of mismatches in DNA. It is required for dam-dependent methyl-directed DNA mismatch repair. May act as a 'molecular matchmaker', a protein that promotes the formation of a stable complex between two or more DNA-binding proteins in an ATP-dependent manner without itself being part of a final effector complex. The protein is DNA mismatch repair protein MutL of Anaeromyxobacter sp. (strain K).